Consider the following 266-residue polypeptide: Exosome complex component Rrp42 (266 aa).

This sequence belongs to the RNase PH family. Rrp42 subfamily. In terms of assembly, component of the archaeal exosome complex. Forms a hexameric ring-like arrangement composed of 3 Rrp41-Rrp42 heterodimers. The hexameric ring associates with a trimer of Rrp4 and/or Csl4 subunits.

It is found in the cytoplasm. Its function is as follows. Non-catalytic component of the exosome, which is a complex involved in RNA degradation. Contributes to the structuring of the Rrp41 active site. The protein is Exosome complex component Rrp42 of Methanosarcina acetivorans (strain ATCC 35395 / DSM 2834 / JCM 12185 / C2A).